Reading from the N-terminus, the 674-residue chain is Amino-acid acetyltransferase, mitochondrial (674 aa).

The transit peptide at methionine 1–phenylalanine 50 directs the protein to the mitochondrion. The span at proline 33–serine 45 shows a compositional bias: polar residues. Residues proline 33–glutamate 74 form a disordered region. The N-acetyltransferase domain maps to glycine 497 to proline 665.

This sequence belongs to the acetyltransferase family.

Its subcellular location is the mitochondrion. It catalyses the reaction L-glutamate + acetyl-CoA = N-acetyl-L-glutamate + CoA + H(+). It functions in the pathway amino-acid biosynthesis; L-arginine biosynthesis; N(2)-acetyl-L-ornithine from L-glutamate: step 1/4. N-acetylglutamate synthase involved in arginine biosynthesis. The sequence is that of Amino-acid acetyltransferase, mitochondrial (ARG2) from Podospora anserina (strain S / ATCC MYA-4624 / DSM 980 / FGSC 10383) (Pleurage anserina).